Reading from the N-terminus, the 94-residue chain is Neurotoxin LmNaTx45.2 (94 aa).

Positions 1–18 (MKLAILSLFLVFQIGVES) are cleaved as a signal peptide. The LCN-type CS-alpha/beta domain maps to 20 to 86 (KNGFALDHYG…IGDSRKNYCD (67 aa)). Disulfide bonds link C34–C85, C44–C63, C48–C65, and C59–C85.

The protein belongs to the long (4 C-C) scorpion toxin superfamily. Sodium channel inhibitor family. Beta subfamily. In terms of tissue distribution, expressed by the venom gland.

It localises to the secreted. Binds voltage-independently at site-4 of sodium channels (Nav) and shift the voltage of activation toward more negative potentials thereby affecting sodium channel activation and promoting spontaneous and repetitive firing. The protein is Neurotoxin LmNaTx45.2 of Lychas mucronatus (Chinese swimming scorpion).